The sequence spans 810 residues: Bifunctional aspartokinase/homoserine dehydrogenase 2 (810 aa).

Residues 2–252 (SVIAQAGAKG…VKDACLLPLL (251 aa)) form an aspartokinase region. The interface stretch occupies residues 253–463 (RLDEASELAR…RAEKRIGLVL (211 aa)). A homoserine dehydrogenase region spans residues 464–810 (FGKGNIGSRW…SDINRLAQLL (347 aa)). 2 residues coordinate NADP(+): asparagine 468 and isoleucine 469. The NAD(+) site is built by isoleucine 469 and valine 498. Isoleucine 469 contacts NADPH. NADP(+) contacts are provided by arginine 501, threonine 549, and lysine 573. Residue threonine 549 coordinates NAD(+). NADPH is bound by residues threonine 549 and lysine 573. Positions 603, 605, and 607 each coordinate Na(+). The NADP(+) site is built by glycine 658 and glutamate 661. The L-homoserine site is built by glutamate 661 and aspartate 672. Lysine 676 functions as the Proton donor in the catalytic mechanism. Glycine 791 contacts NADP(+). Glycine 791 is a binding site for NAD(+). An NADPH-binding site is contributed by glycine 791.

In the N-terminal section; belongs to the aspartokinase family. It in the C-terminal section; belongs to the homoserine dehydrogenase family. In terms of assembly, homotetramer. Requires a metal cation as cofactor.

It catalyses the reaction L-homoserine + NADP(+) = L-aspartate 4-semialdehyde + NADPH + H(+). The enzyme catalyses L-homoserine + NAD(+) = L-aspartate 4-semialdehyde + NADH + H(+). It carries out the reaction L-aspartate + ATP = 4-phospho-L-aspartate + ADP. It functions in the pathway amino-acid biosynthesis; L-lysine biosynthesis via DAP pathway; (S)-tetrahydrodipicolinate from L-aspartate: step 1/4. It participates in amino-acid biosynthesis; L-methionine biosynthesis via de novo pathway; L-homoserine from L-aspartate: step 1/3. The protein operates within amino-acid biosynthesis; L-methionine biosynthesis via de novo pathway; L-homoserine from L-aspartate: step 3/3. Its pathway is amino-acid biosynthesis; L-threonine biosynthesis; L-threonine from L-aspartate: step 1/5. It functions in the pathway amino-acid biosynthesis; L-threonine biosynthesis; L-threonine from L-aspartate: step 3/5. Its function is as follows. Bifunctional aspartate kinase and homoserine dehydrogenase that catalyzes the first and the third steps toward the synthesis of lysine, methionine and threonine from aspartate. This chain is Bifunctional aspartokinase/homoserine dehydrogenase 2 (metL), found in Escherichia coli (strain K12).